We begin with the raw amino-acid sequence, 181 residues long: Inner membrane-spanning protein YciB (181 aa).

5 helical membrane-spanning segments follow: residues 10-30 (LVIF…GALI), 50-70 (MHLI…VFHD), 80-100 (IIYS…KSIL), 118-138 (VTWY…YVAF), and 148-168 (FKVF…VFYL).

It belongs to the YciB family.

It is found in the cell inner membrane. Its function is as follows. Plays a role in cell envelope biogenesis, maintenance of cell envelope integrity and membrane homeostasis. In Shewanella baltica (strain OS223), this protein is Inner membrane-spanning protein YciB.